We begin with the raw amino-acid sequence, 477 residues long: MSTPQLMQGMQKDLTCPLCLELFRAPVTPECGHTFCQGCLTGAPKNQDQNGSTPCPTCQTPSRPETLQINRQLEHLVQSFKQVPKGHCLEHLDPLSVYCEQDKELICGVCASLGKHKGHNIITAAEAYAKLKRQLPQQQVILQEARLKKEKTVAVLDRQVAEVQDTVSRFKGNVKHQLNAMRSYLSIMEASLSKEADNAEHTATEALLVERKTMGHYLDQLRQMDGVLKDVESQEQTEFLRKYCVVAARLNKILAESPPPGRLDIQLPIISDEFKFQVWRKMFRALMPALENLTFDPDTAQQNLVVFSDGKSVECSEQKQSVSDEPNRFDKSNCLVSKESFTEGEHYWEVLVEDKPRWALGVISETANRKGKLHASPSNGFWLIGCKEGKVYEAHTEQKEPRVLRVEGRPEKIGIYLSFSDGVVSFFDSSDEDNIKLLYTFNERFSGRLHPFFDVCWHDKGKNAQPLKIFYPPAEQL.

Zn(2+) is bound by residues L14, P17, P29, C31, T34, Q37, T53, P56, G86, L89, V97, E100, L105, G108, G114, and K117. The segment at 16-59 (CPLCLELFRAPVTPECGHTFCQGCLTGAPKNQDQNGSTPCPTCQ) adopts an RING-type zinc-finger fold. Residues 83 to 124 (VPKGHCLEHLDPLSVYCEQDKELICGVCASLGKHKGHNIITA) form a B box-type zinc finger. The stretch at 135–232 (LPQQQVILQE…QMDGVLKDVE (98 aa)) forms a coiled coil. The B30.2/SPRY domain maps to 272–476 (DEFKFQVWRK…LKIFYPPAEQ (205 aa)).

Belongs to the TRIM/RBCC family. In terms of assembly, homodimer. Homooligomer; disulfide-linked. Oligomerizes on the phospholipid membrane. In terms of processing, disulfide bond formation at Cys-244 occurs in case of membrane damage that cause the entry of the oxidized milieu of the extracellular space, resulting in homooligomerization.

The protein resides in the cell membrane. It is found in the sarcolemma. The protein localises to the cytoplasmic vesicle membrane. The enzyme catalyses S-ubiquitinyl-[E2 ubiquitin-conjugating enzyme]-L-cysteine + [acceptor protein]-L-lysine = [E2 ubiquitin-conjugating enzyme]-L-cysteine + N(6)-ubiquitinyl-[acceptor protein]-L-lysine.. It participates in protein modification; protein ubiquitination. Specifically binds phosphatidylserine. The binding to phospholipids enhances ubiquitination activity. Its function is as follows. Muscle-specific E3 ubiquitin-protein ligase that plays a central role in cell membrane repair by nucleating the assembly of the repair machinery at injury sites. Acts as a sensor of oxidation: upon membrane damage, entry of extracellular oxidative environment results in disulfide bond formation and homooligomerization at the injury site. This oligomerization acts as a nucleation site for recruitment of TRIM72-containing vesicles to the injury site, leading to membrane patch formation. Probably acts upstream of the Ca(2+)-dependent membrane resealing process. Required for transport of DYSF to sites of cell injury during repair patch formation. Regulates membrane budding and exocytosis. May be involved in the regulation of the mobility of KCNB1-containing endocytic vesicles. This chain is Tripartite motif-containing protein 72 (trim72), found in Xenopus tropicalis (Western clawed frog).